A 158-amino-acid polypeptide reads, in one-letter code: Methylated-DNA--protein-cysteine methyltransferase (158 aa).

Cys126 functions as the Nucleophile; methyl group acceptor in the catalytic mechanism.

The protein belongs to the MGMT family.

It localises to the cytoplasm. The enzyme catalyses a 6-O-methyl-2'-deoxyguanosine in DNA + L-cysteinyl-[protein] = S-methyl-L-cysteinyl-[protein] + a 2'-deoxyguanosine in DNA. It catalyses the reaction a 4-O-methyl-thymidine in DNA + L-cysteinyl-[protein] = a thymidine in DNA + S-methyl-L-cysteinyl-[protein]. Its function is as follows. Involved in the cellular defense against the biological effects of O6-methylguanine (O6-MeG) and O4-methylthymine (O4-MeT) in DNA. Repairs the methylated nucleobase in DNA by stoichiometrically transferring the methyl group to a cysteine residue in the enzyme. This is a suicide reaction: the enzyme is irreversibly inactivated. In Methanosarcina barkeri (strain Fusaro / DSM 804), this protein is Methylated-DNA--protein-cysteine methyltransferase.